A 382-amino-acid polypeptide reads, in one-letter code: DNA replication and repair protein RecF (382 aa).

30 to 37 provides a ligand contact to ATP; that stretch reads GPNGHGKS.

The protein belongs to the RecF family.

It localises to the cytoplasm. Functionally, the RecF protein is involved in DNA metabolism; it is required for DNA replication and normal SOS inducibility. RecF binds preferentially to single-stranded, linear DNA. It also seems to bind ATP. This Magnetococcus marinus (strain ATCC BAA-1437 / JCM 17883 / MC-1) protein is DNA replication and repair protein RecF.